The sequence spans 362 residues: Histidinol-phosphate aminotransferase (362 aa).

Lys-222 is modified (N6-(pyridoxal phosphate)lysine).

This sequence belongs to the class-II pyridoxal-phosphate-dependent aminotransferase family. Histidinol-phosphate aminotransferase subfamily. Homodimer. It depends on pyridoxal 5'-phosphate as a cofactor.

It carries out the reaction L-histidinol phosphate + 2-oxoglutarate = 3-(imidazol-4-yl)-2-oxopropyl phosphate + L-glutamate. It participates in amino-acid biosynthesis; L-histidine biosynthesis; L-histidine from 5-phospho-alpha-D-ribose 1-diphosphate: step 7/9. The sequence is that of Histidinol-phosphate aminotransferase from Shewanella amazonensis (strain ATCC BAA-1098 / SB2B).